A 1024-amino-acid polypeptide reads, in one-letter code: Beta-galactosidase (1024 aa).

2 residues coordinate substrate: N100 and D198. D198 lines the Na(+) pocket. Positions 414, 416, and 459 each coordinate Mg(2+). Substrate-binding positions include E459 and 535 to 538 (EYAH). E459 functions as the Proton donor in the catalytic mechanism. E535 (nucleophile) is an active-site residue. A Mg(2+)-binding site is contributed by N595. 2 residues coordinate Na(+): F599 and N602. Positions 602 and 995 each coordinate substrate.

The protein belongs to the glycosyl hydrolase 2 family. In terms of assembly, homotetramer. The cofactor is Mg(2+). Na(+) serves as cofactor.

The catalysed reaction is Hydrolysis of terminal non-reducing beta-D-galactose residues in beta-D-galactosides.. This Vibrio cholerae serotype O1 (strain ATCC 39541 / Classical Ogawa 395 / O395) protein is Beta-galactosidase.